Consider the following 230-residue polypeptide: UPF0173 metal-dependent hydrolase MK1542 (230 aa).

The protein belongs to the UPF0173 family.

The sequence is that of UPF0173 metal-dependent hydrolase MK1542 from Methanopyrus kandleri (strain AV19 / DSM 6324 / JCM 9639 / NBRC 100938).